A 116-amino-acid chain; its full sequence is NADPH-dependent 7-cyano-7-deazaguanine reductase (116 aa).

Cysteine 31 serves as the catalytic Thioimide intermediate. Aspartate 38 acts as the Proton donor in catalysis. Substrate-binding positions include 53 to 55 (VEL) and 72 to 73 (YE).

This sequence belongs to the GTP cyclohydrolase I family. QueF type 1 subfamily.

It is found in the cytoplasm. It catalyses the reaction 7-aminomethyl-7-carbaguanine + 2 NADP(+) = 7-cyano-7-deazaguanine + 2 NADPH + 3 H(+). It functions in the pathway tRNA modification; tRNA-queuosine biosynthesis. In terms of biological role, catalyzes the NADPH-dependent reduction of 7-cyano-7-deazaguanine (preQ0) to 7-aminomethyl-7-deazaguanine (preQ1). The chain is NADPH-dependent 7-cyano-7-deazaguanine reductase from Chlorobium chlorochromatii (strain CaD3).